We begin with the raw amino-acid sequence, 88 residues long: Hemotin (88 aa).

Residues 1–14 are Lumenal-facing; that stretch reads MDCFKVFEVVFQSE. The helical transmembrane segment at 15-37 threads the bilayer; sequence INPLLLIPAVATIALTLCCYCYH. Residues 38–88 lie on the Cytoplasmic side of the membrane; that stretch reads GYQWIRDRRTARIEEQQAQLPLPLSRISITPGCSMVATTKLTHSRNSVDIY.

Interacts with 14-3-3zeta. Expressed in hemocytes.

The protein localises to the early endosome membrane. Negatively regulates early endosome maturation by binding to and repressing the activity of 14-3-3zeta which prevents the 14-3-3zeta-mediated activation of phosphoinositide 3-kinase Pi3K68D. This, in turn, inhibits the Pi3K68D-mediated conversion of phosphatidylinositol to phosphatidylinositol-3-phosphate and prevents progression of early endosomes through the maturation process which regulates subsequent steps of phagocytic processing. In Drosophila melanogaster (Fruit fly), this protein is Hemotin.